The primary structure comprises 248 residues: tRNA (guanine-N(1)-)-methyltransferase (248 aa).

S-adenosyl-L-methionine-binding positions include glycine 117 and 137–142; that span reads LGDFVL.

Belongs to the RNA methyltransferase TrmD family. As to quaternary structure, homodimer.

It localises to the cytoplasm. The catalysed reaction is guanosine(37) in tRNA + S-adenosyl-L-methionine = N(1)-methylguanosine(37) in tRNA + S-adenosyl-L-homocysteine + H(+). Its function is as follows. Specifically methylates guanosine-37 in various tRNAs. In Herminiimonas arsenicoxydans, this protein is tRNA (guanine-N(1)-)-methyltransferase.